Reading from the N-terminus, the 363-residue chain is GTPase Obg (363 aa).

The Obg domain occupies 1-159; sequence MKFVDEAFID…KSLKLELKVL (159 aa). The OBG-type G domain maps to 160 to 341; sequence ADVGLLGRPN…LVHAIFGHVQ (182 aa). Residues 166 to 173, 191 to 195, 213 to 216, 291 to 294, and 322 to 324 each bind GTP; these read GRPNAGKS, FTTLH, DIPG, NKLD, and SAL. 2 residues coordinate Mg(2+): S173 and T193. The disordered stretch occupies residues 343–363; the sequence is GQRMDNEPPPLDPRFASAGPA.

It belongs to the TRAFAC class OBG-HflX-like GTPase superfamily. OBG GTPase family. As to quaternary structure, monomer. Requires Mg(2+) as cofactor.

It localises to the cytoplasm. Its function is as follows. An essential GTPase which binds GTP, GDP and possibly (p)ppGpp with moderate affinity, with high nucleotide exchange rates and a fairly low GTP hydrolysis rate. Plays a role in control of the cell cycle, stress response, ribosome biogenesis and in those bacteria that undergo differentiation, in morphogenesis control. The chain is GTPase Obg from Verminephrobacter eiseniae (strain EF01-2).